The following is a 155-amino-acid chain: Isotocin-neurophysin IT 1 (155 aa).

The first 19 residues, 1–19 (MTGTAISVCLLFLLSVCSA), serve as a signal peptide directing secretion. A disulfide bridge connects residues Cys20 and Cys25. A Glycine amide modification is found at Gly28. Intrachain disulfides connect Cys41/Cys85, Cys44/Cys58, Cys52/Cys75, Cys59/Cys65, Cys92/Cys105, Cys99/Cys117, and Cys106/Cys111.

The protein belongs to the vasopressin/oxytocin family. Seven disulfide bonds are present in neurophysin.

Isotocin causes contraction of smooth muscles. This Takifugu rubripes (Japanese pufferfish) protein is Isotocin-neurophysin IT 1.